Consider the following 419-residue polypeptide: UPF0761 membrane protein ACIAD3168 (419 aa).

6 consecutive transmembrane segments (helical) span residues 42 to 62 (ALTYTTLFAVVPMLTVFLVII), 105 to 125 (LTVIGILFLFVTTVMMLSTIE), 148 to 168 (WTIISLGPIILGSAFVISSTV), 186 to 206 (AFILWLISFGLTILGFFILYW), 212 to 232 (TVPMYAAIIAACFSAAIFELL), and 252 to 272 (AFAAIPIFLLWIFLSWNIVLL).

The protein belongs to the UPF0761 family.

It localises to the cell inner membrane. This chain is UPF0761 membrane protein ACIAD3168, found in Acinetobacter baylyi (strain ATCC 33305 / BD413 / ADP1).